The sequence spans 155 residues: Transcriptional repressor NrdR (155 aa).

A zinc finger spans residues 3–34 (CPKCDHNGTRVLDSRPVQDHYSIRRRRECEKC). Positions 49 to 139 (LIIVKKDGNR…VYRQFKDITV (91 aa)) constitute an ATP-cone domain.

It belongs to the NrdR family. Zn(2+) serves as cofactor.

Functionally, negatively regulates transcription of bacterial ribonucleotide reductase nrd genes and operons by binding to NrdR-boxes. The polypeptide is Transcriptional repressor NrdR (Exiguobacterium sp. (strain ATCC BAA-1283 / AT1b)).